The sequence spans 282 residues: Elongation factor Ts (282 aa).

Residues 80 to 83 (TDFV) form an involved in Mg(2+) ion dislocation from EF-Tu region.

The protein belongs to the EF-Ts family.

It localises to the cytoplasm. Associates with the EF-Tu.GDP complex and induces the exchange of GDP to GTP. It remains bound to the aminoacyl-tRNA.EF-Tu.GTP complex up to the GTP hydrolysis stage on the ribosome. This Chlamydia muridarum (strain MoPn / Nigg) protein is Elongation factor Ts (tsf).